The following is a 437-amino-acid chain: Succinyl-CoA:cyclohexane-1-carboxylate CoA transferase (437 aa).

Residue 221-225 (GWGGI) participates in CoA binding. Catalysis depends on Glu-244, which acts as the 5-glutamyl coenzyme A thioester intermediate. Residues Leu-319, Gly-342, and Lys-367 each contribute to the CoA site.

Belongs to the acetyl-CoA hydrolase/transferase family. Homodimer.

The enzyme catalyses cyclohexane-1-carboxylate + succinyl-CoA = cyclohexane-1-carbonyl-CoA + succinate. The catalysed reaction is cyclohexane-1-carboxylate + butanoyl-CoA = cyclohexane-1-carbonyl-CoA + butanoate. In terms of biological role, acyl-CoA transferase involved in the anaerobic degradation of cyclohexane carboxylic acid (CHC). Catalyzes the activation of CHC to cyclohexane-1-carbonyl-CoA (CHCoA). Benzoic acid and cyclohex-1-ene-1-carboxylic acid can also be used as substrates, but with lower specific activity. Shows highest activity with succinyl-CoA and butanoyl-coA as a CoA donor, and lower activity with crotonyl-CoA, acetyl-CoA, glutaryl-CoA, CH1eneCoA, propionyl-CoA and acetoacetyl-CoA. In vitro, the enzyme can use butanoyl-coA as a CoA donor with greater efficiency than succinyl-CoA. However, succinyl-CoA is the most abundant CoA ester in exponentially grown cells, whereas butanoyl-coA is hardly detectable, indicating that succinyl-CoA is the natural CoA donor for CHC activation. This is Succinyl-CoA:cyclohexane-1-carboxylate CoA transferase from Geobacter metallireducens (strain ATCC 53774 / DSM 7210 / GS-15).